The sequence spans 431 residues: Glucose-1-phosphate adenylyltransferase (431 aa).

K39 is a binding site for beta-D-fructose 1,6-bisphosphate. AMP contacts are provided by R40, H46, and R52. Y114 serves as a coordination point for alpha-D-glucose 1-phosphate. R130 contributes to the AMP binding site. Alpha-D-glucose 1-phosphate-binding positions include G179, 194 to 195 (EK), and S212. Residue R386 participates in AMP binding. 429–431 (QER) is a binding site for beta-D-fructose 1,6-bisphosphate.

This sequence belongs to the bacterial/plant glucose-1-phosphate adenylyltransferase family. Homotetramer.

The catalysed reaction is alpha-D-glucose 1-phosphate + ATP + H(+) = ADP-alpha-D-glucose + diphosphate. It functions in the pathway glycan biosynthesis; glycogen biosynthesis. Its activity is regulated as follows. Allosterically activated by fructose-1,6-bisphosphate (F16BP) and inhibited by AMP. Involved in the biosynthesis of ADP-glucose, a building block required for the elongation reactions to produce glycogen. Catalyzes the reaction between ATP and alpha-D-glucose 1-phosphate (G1P) to produce pyrophosphate and ADP-Glc. The sequence is that of Glucose-1-phosphate adenylyltransferase from Klebsiella pneumoniae subsp. pneumoniae (strain ATCC 700721 / MGH 78578).